The following is a 171-amino-acid chain: uncharacterized protein (171 aa).

To A.aeolicus aq_616.

This is an uncharacterized protein from Aquifex aeolicus (strain VF5).